Consider the following 970-residue polypeptide: Protein bicaudal C homolog 1-B (970 aa).

The disordered stretch occupies residues 1–50; it reads MAAQCGGYMNQSDPGSNSERSADSPLPGSEDDSPGSAAPHDPEWREERFR. Residues 9–19 are compositionally biased toward polar residues; that stretch reads MNQSDPGSNSE. Over residues 40–50 the composition is skewed to basic and acidic residues; it reads HDPEWREERFR. KH domains lie at 130–197 and 282–346; these read RVTL…RVRI and PVST…RQYL. Polar residues predominate over residues 596–605; sequence EASRQSNNHS. Disordered regions lie at residues 596–638, 677–696, and 773–841; these read EASR…SANT, SDSE…APGS, and RRAN…NKSA. The span at 606 to 616 shows a compositional bias: basic and acidic residues; the sequence is SAEEVNSKTDS. Composition is skewed to polar residues over residues 783–810 and 819–831; these read TMST…GSDS and IDSS…SSIG. The region spanning 869-932 is the SAM domain; it reads FKGSDLPELF…LLAISELNKN (64 aa).

Belongs to the BicC family.

In terms of biological role, putative RNA-binding protein. May be involved in regulating gene expression during embryonic development. Seems to be involved in endoderm formation. Ectopic expression results in endoderm formation in the absence of mesoderm induction. The chain is Protein bicaudal C homolog 1-B (bicc1-b) from Xenopus laevis (African clawed frog).